A 168-amino-acid chain; its full sequence is Chorismate pyruvate-lyase (168 aa).

The substrate site is built by Met-36, Arg-78, Leu-116, and Glu-157.

It belongs to the UbiC family. Monomer.

The protein localises to the cytoplasm. It carries out the reaction chorismate = 4-hydroxybenzoate + pyruvate. Its pathway is cofactor biosynthesis; ubiquinone biosynthesis. Removes the pyruvyl group from chorismate, with concomitant aromatization of the ring, to provide 4-hydroxybenzoate (4HB) for the ubiquinone pathway. The chain is Chorismate pyruvate-lyase from Photorhabdus laumondii subsp. laumondii (strain DSM 15139 / CIP 105565 / TT01) (Photorhabdus luminescens subsp. laumondii).